The primary structure comprises 196 residues: Small ribosomal subunit protein uS4c (196 aa).

The segment at 17–36 (ALPGLTRKTPKSGSNLKKKF) is disordered. One can recognise an S4 RNA-binding domain in the interval 89-150 (MRLDNILFRL…NQRSKRLIQN (62 aa)).

This sequence belongs to the universal ribosomal protein uS4 family. As to quaternary structure, part of the 30S ribosomal subunit. Contacts protein S5. The interaction surface between S4 and S5 is involved in control of translational fidelity.

The protein localises to the plastid. It localises to the chloroplast. One of the primary rRNA binding proteins, it binds directly to 16S rRNA where it nucleates assembly of the body of the 30S subunit. In terms of biological role, with S5 and S12 plays an important role in translational accuracy. This Phyllostachys flexuosa (Drooping timber bamboo) protein is Small ribosomal subunit protein uS4c (rps4).